We begin with the raw amino-acid sequence, 148 residues long: MKLDLKILDARMRDYLPAYATTGSAGLDLRACLDAPVTLQPGETTLVPTGLAIHLADPGYAALILPRSGLGHKHGIVLGNLVGLIDSDYQGQLMISTWNRGQTEFVLNPFERLAQLVIVPVVQAQFNIVDDFAESDRGDGGFGSTGRH.

Substrate contacts are provided by residues 67–69 (RSG), Asn-80, 84–86 (LID), and Met-94.

Belongs to the dUTPase family. The cofactor is Mg(2+).

It carries out the reaction dUTP + H2O = dUMP + diphosphate + H(+). It functions in the pathway pyrimidine metabolism; dUMP biosynthesis; dUMP from dCTP (dUTP route): step 2/2. In terms of biological role, this enzyme is involved in nucleotide metabolism: it produces dUMP, the immediate precursor of thymidine nucleotides and it decreases the intracellular concentration of dUTP so that uracil cannot be incorporated into DNA. The sequence is that of Deoxyuridine 5'-triphosphate nucleotidohydrolase from Burkholderia lata (strain ATCC 17760 / DSM 23089 / LMG 22485 / NCIMB 9086 / R18194 / 383).